The following is a 516-amino-acid chain: GMP synthase [glutamine-hydrolyzing] (516 aa).

Residues 8–198 form the Glutamine amidotransferase type-1 domain; sequence KILILDFGSQ…ALNICKCDAL (191 aa). The Nucleophile role is filled by Cys-84. Catalysis depends on residues His-172 and Glu-174. A GMPS ATP-PPase domain is found at 199 to 391; it reads WNIENIIEND…LGLPYNMLYR (193 aa). 226–232 contacts ATP; the sequence is SGGVDSS.

As to quaternary structure, homodimer.

The catalysed reaction is XMP + L-glutamine + ATP + H2O = GMP + L-glutamate + AMP + diphosphate + 2 H(+). The protein operates within purine metabolism; GMP biosynthesis; GMP from XMP (L-Gln route): step 1/1. Its function is as follows. Catalyzes the synthesis of GMP from XMP. The protein is GMP synthase [glutamine-hydrolyzing] of Francisella philomiragia subsp. philomiragia (strain ATCC 25017 / CCUG 19701 / FSC 153 / O#319-036).